A 341-amino-acid chain; its full sequence is tRNA N6-adenosine threonylcarbamoyltransferase (341 aa).

Histidine 111 and histidine 115 together coordinate Fe cation. Substrate-binding positions include 134 to 138 (LVSGG), aspartate 167, glycine 180, and asparagine 276. Fe cation is bound at residue aspartate 304.

The protein belongs to the KAE1 / TsaD family. Requires Fe(2+) as cofactor.

The protein resides in the cytoplasm. It catalyses the reaction L-threonylcarbamoyladenylate + adenosine(37) in tRNA = N(6)-L-threonylcarbamoyladenosine(37) in tRNA + AMP + H(+). Required for the formation of a threonylcarbamoyl group on adenosine at position 37 (t(6)A37) in tRNAs that read codons beginning with adenine. Is involved in the transfer of the threonylcarbamoyl moiety of threonylcarbamoyl-AMP (TC-AMP) to the N6 group of A37, together with TsaE and TsaB. TsaD likely plays a direct catalytic role in this reaction. This is tRNA N6-adenosine threonylcarbamoyltransferase from Pseudomonas syringae pv. syringae (strain B728a).